Here is a 144-residue protein sequence, read N- to C-terminus: Probable copper-binding protein PcoE (144 aa).

The signal sequence occupies residues 1-20; the sequence is MKKILVSFVAIMAVASSAMA. Residues 86-144 are disordered; that stretch reads MHKKMMKSKPAASNETAKSFSEMNEHEKSAVVHEKANNGQSSVIHQQQAEKHRSQITQN. Over residues 96–107 the composition is skewed to polar residues; the sequence is AASNETAKSFSE. Residues 108–121 show a composition bias toward basic and acidic residues; the sequence is MNEHEKSAVVHEKA. Residues 122 to 132 show a composition bias toward polar residues; sequence NNGQSSVIHQQ.

This sequence to S.typhimurium SilE.

It localises to the periplasm. Its function is as follows. Required for the copper-inducible expression of copper resistance. Activated by the two-component regulatory system CusS/CusR. This chain is Probable copper-binding protein PcoE (pcoE), found in Escherichia coli.